Consider the following 144-residue polypeptide: Large ribosomal subunit protein uL16 (144 aa).

The protein belongs to the universal ribosomal protein uL16 family. As to quaternary structure, part of the 50S ribosomal subunit.

Binds 23S rRNA and is also seen to make contacts with the A and possibly P site tRNAs. The protein is Large ribosomal subunit protein uL16 of Lacticaseibacillus paracasei (strain ATCC 334 / BCRC 17002 / CCUG 31169 / CIP 107868 / KCTC 3260 / NRRL B-441) (Lactobacillus paracasei).